We begin with the raw amino-acid sequence, 620 residues long: 1-deoxy-D-xylulose-5-phosphate synthase (620 aa).

Thiamine diphosphate-binding positions include H80 and 121 to 123 (GHS). Residue D152 coordinates Mg(2+). Residues 153–154 (GA), N181, Y288, and E370 contribute to the thiamine diphosphate site. N181 serves as a coordination point for Mg(2+).

The protein belongs to the transketolase family. DXPS subfamily. In terms of assembly, homodimer. Mg(2+) serves as cofactor. Thiamine diphosphate is required as a cofactor.

It carries out the reaction D-glyceraldehyde 3-phosphate + pyruvate + H(+) = 1-deoxy-D-xylulose 5-phosphate + CO2. Its pathway is metabolic intermediate biosynthesis; 1-deoxy-D-xylulose 5-phosphate biosynthesis; 1-deoxy-D-xylulose 5-phosphate from D-glyceraldehyde 3-phosphate and pyruvate: step 1/1. Catalyzes the acyloin condensation reaction between C atoms 2 and 3 of pyruvate and glyceraldehyde 3-phosphate to yield 1-deoxy-D-xylulose-5-phosphate (DXP). The sequence is that of 1-deoxy-D-xylulose-5-phosphate synthase from Enterobacter sp. (strain 638).